The chain runs to 540 residues: Amino acid transporter AVT1B (540 aa).

Residues 1-11 show a composition bias toward polar residues; the sequence is MNHSTSDQSLY. Residues 1–55 are disordered; it reads MNHSTSDQSLYIESDDGDDERKHLSDDEDDDGTLSDTSDAYNQNQHHLSKASPYS. 11 helical membrane passes run 155–175, 180–200, 227–247, 273–293, 297–317, 332–352, 367–387, 412–432, 452–474, 478–500, and 511–531; these read AVLN…PYAV, WLGL…GLLL, ILVS…YIIL, LFAL…DLSV, ISAG…WVGL, LATL…HGVF, AVLL…AVMG, IALW…LSPV, IAIR…FFGL, LIGS…LSIL, and ICIL…YSAL.

Belongs to the amino acid/polyamine transporter 2 family. Amino acid/auxin permease (AAAP) (TC 2.A.18.5) subfamily.

It localises to the membrane. This Arabidopsis thaliana (Mouse-ear cress) protein is Amino acid transporter AVT1B.